A 234-amino-acid polypeptide reads, in one-letter code: Carboxy-S-adenosyl-L-methionine synthase (234 aa).

S-adenosyl-L-methionine is bound by residues Tyr35, 60 to 62 (GSS), 83 to 84 (DN), Asn124, and Arg191.

This sequence belongs to the class I-like SAM-binding methyltransferase superfamily. Cx-SAM synthase family. Homodimer.

It catalyses the reaction prephenate + S-adenosyl-L-methionine = carboxy-S-adenosyl-L-methionine + 3-phenylpyruvate + H2O. Catalyzes the conversion of S-adenosyl-L-methionine (SAM) to carboxy-S-adenosyl-L-methionine (Cx-SAM). The sequence is that of Carboxy-S-adenosyl-L-methionine synthase from Nautilia profundicola (strain ATCC BAA-1463 / DSM 18972 / AmH).